Consider the following 546-residue polypeptide: Hydroxylamine reductase (546 aa).

[4Fe-4S] cluster-binding residues include Cys3, Cys6, Cys18, and Cys25. Positions 245, 269, 313, 401, 429, 454, 488, and 490 each coordinate hybrid [4Fe-2O-2S] cluster. Cys401 carries the cysteine persulfide modification.

This sequence belongs to the HCP family. [4Fe-4S] cluster is required as a cofactor. The cofactor is hybrid [4Fe-2O-2S] cluster.

The protein localises to the cytoplasm. It carries out the reaction A + NH4(+) + H2O = hydroxylamine + AH2 + H(+). Its activity is regulated as follows. Inhibited by cyanide and by sulfide and iron reagents such as dithioerythritol, 2,2'-dipyridyl and o-phenanthroline. Could be involved in assimilation and/or detoxification of hydroxylamine, which is a toxic compound that may be formed during nitrate/nitrite assimilation. Catalyzes the reduction of hydroxylamine to form NH(3) and H(2)O. It has a low reductase activity with FAD, FMN, benzyl viologen and bromphenol blue as electrons donors, but it is not able to use NAD or NADP. In Rhodobacter capsulatus (Rhodopseudomonas capsulata), this protein is Hydroxylamine reductase.